The primary structure comprises 400 residues: Acetate kinase (400 aa).

Asn10 contacts Mg(2+). ATP is bound at residue Lys17. Arg91 is a substrate binding site. The Proton donor/acceptor role is filled by Asp150. ATP contacts are provided by residues 210 to 214 (HLGSG), 285 to 287 (DCR), and 333 to 337 (GIGEN). Glu387 contacts Mg(2+).

Belongs to the acetokinase family. Homodimer. It depends on Mg(2+) as a cofactor. Mn(2+) is required as a cofactor.

It localises to the cytoplasm. It carries out the reaction acetate + ATP = acetyl phosphate + ADP. It functions in the pathway metabolic intermediate biosynthesis; acetyl-CoA biosynthesis; acetyl-CoA from acetate: step 1/2. Catalyzes the formation of acetyl phosphate from acetate and ATP. Can also catalyze the reverse reaction. This chain is Acetate kinase, found in Baumannia cicadellinicola subsp. Homalodisca coagulata.